Here is a 394-residue protein sequence, read N- to C-terminus: Class II hydrophobin TH1 (394 aa).

An N-terminal signal peptide occupies residues Met-1–Ala-16. Positions Val-17 to Gly-42 are disordered. Over residues Gly-33–Gly-42 the composition is skewed to gly residues. The segment at Gly-48–Ile-117 is hydrophobin 1. 4 disulfides stabilise this stretch: Cys-52-Cys-101, Cys-62-Cys-92, Cys-63-Cys-75, and Cys-102-Cys-113. The interval Gly-135–Asn-157 is disordered. Positions Gly-148–Asn-157 are enriched in gly residues. Hydrophobin stretches follow at residues Gly-200–Ile-270 and Gly-326–Ala-394.

Belongs to the cerato-ulmin hydrophobin family. In terms of assembly, homotetramer. Further self-assembles to form highly ordered films at water-air interfaces through intermolecular interactions. In terms of processing, several N-termini starting at positions 17, 20, 22, 28 and 48 have been identified by direct sequencing. Contains a number of intrachain disulfide bonds. Post-translationally, not glycosylated.

The protein localises to the secreted. It localises to the cell wall. Its function is as follows. Aerial growth, conidiation, and dispersal of filamentous fungi in the environment rely upon a capability of their secreting small amphipathic proteins called hydrophobins (HPBs) with low sequence identity. Class I can self-assemble into an outermost layer of rodlet bundles on aerial cell surfaces, conferring cellular hydrophobicity that supports fungal growth, development and dispersal; whereas Class II form highly ordered films at water-air interfaces through intermolecular interactions but contribute nothing to the rodlet structure. TH1 is a class II hydrophobin that reduces water surface tension dramatically upon assembly at the water-air interface and plays a role in the formation of aerial hyphae. This Claviceps fusiformis (Ergot fungus) protein is Class II hydrophobin TH1 (TH1).